The primary structure comprises 713 residues: Calpastatin (713 aa).

The span at 1 to 21 shows a compositional bias: low complexity; the sequence is MSRPGPKPAASSRPRRGAAAS. The disordered stretch occupies residues 1–152; sequence MSRPGPKPAA…SADGESVAGG (152 aa). Positions 47–64 are enriched in polar residues; it reads VTASSAATGTSPRMSTTG. Phosphoserine is present on Ser-57. Residue Lys-69 forms a Glycyl lysine isopeptide (Lys-Gly) (interchain with G-Cter in SUMO2) linkage. N6-acetyllysine is present on Lys-86. The span at 120-129 shows a compositional bias: polar residues; sequence SRSNEQIVSE. 2 positions are modified to phosphoserine: Ser-122 and Ser-171. At Thr-173 the chain carries Phosphothreonine. Residues 208–260 form an Inhibitory domain 1 repeat; the sequence is TNKDDPPYTGPVVLDPMDSTYLEALGIKEGTIPPEYRKLLEKNEAITGPLPDS. Residues 253 to 402 form a disordered region; the sequence is ITGPLPDSPK…PEETSKCLSE (150 aa). A phosphoserine mark is found at Ser-260 and Ser-281. Composition is skewed to polar residues over residues 275–285, 294–304, and 326–346; these read SDFTCSSPTGK, GESSKAQSAGV, and QALQALSDSLGTRQPDPQSHL. An Inhibitory domain 2 repeat occupies 341–393; it reads DPQSHLRQAKQVKEAKAKEERQEKCGEDEDTVPAEYRLKPAKDKDGKPLLPEP. Basic and acidic residues-rich tracts occupy residues 351-365 and 376-387; these read QVKEAKAKEERQEKC and YRLKPAKDKDGK. A phosphoserine mark is found at Ser-401, Ser-403, Ser-410, and Ser-445. The interval 442–507 is disordered; the sequence is LARSLGTRKE…PLLPKEAEEQ (66 aa). Positions 448–505 are enriched in basic and acidic residues; that stretch reads TRKEDPEDEKSLVDKVKEKAKEEDHEKLGEKEETIPPDYRLEIVKDKDGKPLLPKEAE. One copy of the Inhibitory domain 3 repeat lies at 451–504; the sequence is EDPEDEKSLVDKVKEKAKEEDHEKLGEKEETIPPDYRLEIVKDKDGKPLLPKEA. Ser-521 and Ser-532 each carry phosphoserine. Positions 544-558 are enriched in polar residues; it reads VSETVSQVPAPSNHT. A disordered region spans residues 544–713; that stretch reads VSETVSQVPA…PKPKVDEDAT (170 aa). 2 positions are modified to phosphoserine: Ser-580 and Ser-582. One copy of the Inhibitory domain 4 repeat lies at 588–641; sequence PDPDENKPLDDKVKEKIKAEHSEKLGERDDTIPPEYRHLLDNDGKDKPEKPLTK. Basic and acidic residues-rich tracts occupy residues 588–648 and 687–713; these read PDPD…KLGQ and SKNEEKTKDSSKKTEEVPKPKVDEDAT.

It belongs to the protease inhibitor I27 (calpastatin) family.

In terms of biological role, specific inhibition of calpain (calcium-dependent cysteine protease). Plays a key role in postmortem tenderization of meat and have been proposed to be involved in muscle protein degradation in living tissue. The protein is Calpastatin (Cast) of Rattus norvegicus (Rat).